Here is a 408-residue protein sequence, read N- to C-terminus: Peptidase T-like protein RB0614 (408 aa).

His-80 serves as a coordination point for Zn(2+). The active site involves Asp-82. Residue Asp-142 participates in Zn(2+) binding. The Proton acceptor role is filled by Glu-174. The Zn(2+) site is built by Glu-175, Asp-198, and His-380.

It belongs to the peptidase M20B family. It depends on Zn(2+) as a cofactor.

The polypeptide is Peptidase T-like protein RB0614 (Rhizobium meliloti (strain 1021) (Ensifer meliloti)).